The sequence spans 412 residues: Major facilitator superfamily domain-containing protein 3 (412 aa).

A run of 12 helical transmembrane segments spans residues 10 to 30 (GLYL…PILL), 40 to 60 (VGLT…APLV), 68 to 88 (VWLT…AVLP), 99 to 119 (TTVM…DVAL), 152 to 172 (GGLL…LLAA), 173 to 193 (TYWL…LPWP), 204 to 224 (YLLQ…FVLT), 252 to 272 (LWSG…GGAL), 291 to 311 (LGSL…GASV), 320 to 340 (AVLL…TATF), 361 to 381 (FLAT…GVLA), and 384 to 404 (LGPH…VLDL).

The protein belongs to the major facilitator superfamily. In brain, expressed in the cortex, striatum, hippocampus, hypothalamus, thalamus and cerebellum (at protein level). Widely expressed with highest levels in kidney and liver.

The protein resides in the membrane. The polypeptide is Major facilitator superfamily domain-containing protein 3 (Mfsd3) (Mus musculus (Mouse)).